A 462-amino-acid chain; its full sequence is uncharacterized protein (462 aa).

WD repeat units lie at residues 170 to 209 (GGERPIAIVRFSNNGNHFASGSWGGQVKVWNSDNLSEVQL), 212 to 260 (GHTD…PLLR), 263 to 302 (GHLARVGRVAFHPSGDYLVSASFDTTWRLWDVHTGVELLM), 305 to 344 (GHSEGIFSIACQPDGSLVSSGGNDAIGRIWDLRSGKSIMV), 347 to 386 (EHIRQIVAMAWSPNGYQLATSSADDTVKIWDLRKVSLAHT), 389 to 430 (AHSS…LIKS), and 433 to 462 (GHEEKVMSVDGYGDRFISSGYDRTIKLWYP).

It is found in the cytoplasm. This is an uncharacterized protein from Schizosaccharomyces pombe (strain 972 / ATCC 24843) (Fission yeast).